Here is a 220-residue protein sequence, read N- to C-terminus: 7-cyano-7-deazaguanine synthase (220 aa).

11–21 is a binding site for ATP; it reads VSGGMDSVTLM. Residues C186, C194, C197, and C200 each contribute to the Zn(2+) site.

It belongs to the QueC family. Requires Zn(2+) as cofactor.

The catalysed reaction is 7-carboxy-7-deazaguanine + NH4(+) + ATP = 7-cyano-7-deazaguanine + ADP + phosphate + H2O + H(+). It functions in the pathway purine metabolism; 7-cyano-7-deazaguanine biosynthesis. In terms of biological role, catalyzes the ATP-dependent conversion of 7-carboxy-7-deazaguanine (CDG) to 7-cyano-7-deazaguanine (preQ(0)). The polypeptide is 7-cyano-7-deazaguanine synthase (Porphyromonas gingivalis (strain ATCC 33277 / DSM 20709 / CIP 103683 / JCM 12257 / NCTC 11834 / 2561)).